A 424-amino-acid chain; its full sequence is UDP-N-acetylglucosamine 1-carboxyvinyltransferase (424 aa).

22 to 23 (KN) is a binding site for phosphoenolpyruvate. Arg-93 serves as a coordination point for UDP-N-acetyl-alpha-D-glucosamine. Cys-117 (proton donor) is an active-site residue. Residue Cys-117 is modified to 2-(S-cysteinyl)pyruvic acid O-phosphothioketal. Residues 122–126 (RPIDL), Asp-307, and Val-329 contribute to the UDP-N-acetyl-alpha-D-glucosamine site.

It belongs to the EPSP synthase family. MurA subfamily.

The protein localises to the cytoplasm. The catalysed reaction is phosphoenolpyruvate + UDP-N-acetyl-alpha-D-glucosamine = UDP-N-acetyl-3-O-(1-carboxyvinyl)-alpha-D-glucosamine + phosphate. Its pathway is cell wall biogenesis; peptidoglycan biosynthesis. Cell wall formation. Adds enolpyruvyl to UDP-N-acetylglucosamine. The chain is UDP-N-acetylglucosamine 1-carboxyvinyltransferase from Pelodictyon phaeoclathratiforme (strain DSM 5477 / BU-1).